Consider the following 329-residue polypeptide: Cuticle collagen 6 (329 aa).

Triple-helical region regions lie at residues 142–171, 189–212, 216–248, 253–279, and 282–320; these read GAAGPPGPEGPPGNDGKDGRNGNDGKNGRD, GAPGPMGAMGPKGPPGPKGSPGEP, GKSGDDGMAGQPGPIGRPGRDGMKGAPGAAGRL, GPQGAPGKPGPIGPPGPKGNPGPDGQS, and GPPGPPGDSGTPGHEGRAGPNGPAGPPGDNGEKGDCGHC. The segment at 146 to 329 is disordered; sequence PPGPEGPPGN…CPPPRTPPGY (184 aa). Over residues 156-173 the composition is skewed to basic and acidic residues; the sequence is DGKDGRNGNDGKNGRDAE. Residues 187-199 are compositionally biased toward low complexity; that stretch reads PTGAPGPMGAMGP. Positions 200–212 are enriched in pro residues; it reads KGPPGPKGSPGEP. Residues 251–272 show a composition bias toward pro residues; that stretch reads VPGPQGAPGKPGPIGPPGPKGN. Low complexity predominate over residues 273–282; sequence PGPDGQSYQG. Residues 320–329 show a composition bias toward pro residues; sequence CPPPRTPPGY.

It belongs to the cuticular collagen family. Collagen polypeptide chains are complexed within the cuticle by disulfide bonds and other types of covalent cross-links.

Its function is as follows. Nematode cuticles are composed largely of collagen-like proteins. The cuticle functions both as an exoskeleton and as a barrier to protect the worm from its environment. In Caenorhabditis elegans, this protein is Cuticle collagen 6.